The sequence spans 377 residues: uncharacterized protein (377 aa).

Transmembrane regions (helical) follow at residues W21–F41, L66–G86, I163–L183, A197–I217, F236–F256, V292–L312, and I339–F359.

It is found in the cell membrane. This is an uncharacterized protein from Mycoplasma pneumoniae (strain ATCC 29342 / M129 / Subtype 1) (Mycoplasmoides pneumoniae).